The primary structure comprises 292 residues: NAD kinase (292 aa).

The Proton acceptor role is filled by Asp73. NAD(+) is bound by residues 73–74 (DG), 147–148 (NE), His158, Arg175, Asp177, 188–193 (TAYSLS), and Gln247.

It belongs to the NAD kinase family. A divalent metal cation is required as a cofactor.

Its subcellular location is the cytoplasm. It catalyses the reaction NAD(+) + ATP = ADP + NADP(+) + H(+). Its function is as follows. Involved in the regulation of the intracellular balance of NAD and NADP, and is a key enzyme in the biosynthesis of NADP. Catalyzes specifically the phosphorylation on 2'-hydroxyl of the adenosine moiety of NAD to yield NADP. The polypeptide is NAD kinase (Pectobacterium atrosepticum (strain SCRI 1043 / ATCC BAA-672) (Erwinia carotovora subsp. atroseptica)).